The following is a 320-amino-acid chain: Mitochondrial fission regulator 1-like-B (320 aa).

The disordered stretch occupies residues 1–37; sequence MASLGAAAEPERSLFGKDGAEACESPEGRRSGRRKRT. Positions 9–30 are enriched in basic and acidic residues; that stretch reads EPERSLFGKDGAEACESPEGRR.

Belongs to the MTFR1 family.

It localises to the mitochondrion outer membrane. Mitochondrial protein required for adaptation of miochondrial dynamics to metabolic changes. Regulates mitochondrial morphology at steady state and mediates AMPK-dependent stress-induced mitochondrial fragmentation via the control of OPA1 levels. The protein is Mitochondrial fission regulator 1-like-B (mtfr1l-b) of Xenopus laevis (African clawed frog).